Here is a 370-residue protein sequence, read N- to C-terminus: GTPase Obg (370 aa).

Positions 1–159 (MKFIDEARIE…RMLKLELKVL (159 aa)) constitute an Obg domain. Positions 128-147 (LHFKSSTNRAPRQKTDGKPG) are disordered. An OBG-type G domain is found at 160–334 (ADVGLLGMPN…LCYAIYDYLS (175 aa)). Residues 166-173 (GMPNAGKS), 191-195 (FTTLA), 213-216 (DIPG), 284-287 (NKLD), and 315-317 (SAL) contribute to the GTP site. Mg(2+) is bound by residues serine 173 and threonine 193.

Belongs to the TRAFAC class OBG-HflX-like GTPase superfamily. OBG GTPase family. In terms of assembly, monomer. It depends on Mg(2+) as a cofactor.

It is found in the cytoplasm. Functionally, an essential GTPase which binds GTP, GDP and possibly (p)ppGpp with moderate affinity, with high nucleotide exchange rates and a fairly low GTP hydrolysis rate. Plays a role in control of the cell cycle, stress response, ribosome biogenesis and in those bacteria that undergo differentiation, in morphogenesis control. The polypeptide is GTPase Obg (Burkholderia cenocepacia (strain ATCC BAA-245 / DSM 16553 / LMG 16656 / NCTC 13227 / J2315 / CF5610) (Burkholderia cepacia (strain J2315))).